Here is a 523-residue protein sequence, read N- to C-terminus: 2-isopropylmalate synthase (523 aa).

The Pyruvate carboxyltransferase domain maps to 5–267 (VIIFDTTLRD…HTNINHHEIW (263 aa)). Positions 14, 202, 204, and 238 each coordinate Mn(2+). Positions 392-523 (RLDYFSVQSG…QNKENNKETV (132 aa)) are regulatory domain.

Belongs to the alpha-IPM synthase/homocitrate synthase family. LeuA type 1 subfamily. In terms of assembly, homodimer. Requires Mn(2+) as cofactor.

The protein resides in the cytoplasm. The enzyme catalyses 3-methyl-2-oxobutanoate + acetyl-CoA + H2O = (2S)-2-isopropylmalate + CoA + H(+). It functions in the pathway amino-acid biosynthesis; L-leucine biosynthesis; L-leucine from 3-methyl-2-oxobutanoate: step 1/4. Catalyzes the condensation of the acetyl group of acetyl-CoA with 3-methyl-2-oxobutanoate (2-ketoisovalerate) to form 3-carboxy-3-hydroxy-4-methylpentanoate (2-isopropylmalate). The protein is 2-isopropylmalate synthase of Salmonella newport (strain SL254).